The chain runs to 177 residues: Large ribosomal subunit protein uL6 (177 aa).

The protein belongs to the universal ribosomal protein uL6 family. Part of the 50S ribosomal subunit.

Functionally, this protein binds to the 23S rRNA, and is important in its secondary structure. It is located near the subunit interface in the base of the L7/L12 stalk, and near the tRNA binding site of the peptidyltransferase center. The polypeptide is Large ribosomal subunit protein uL6 (Pasteurella multocida (strain Pm70)).